Consider the following 182-residue polypeptide: Bifunctional protein PyrR (182 aa).

The short motif at 99–111 (VVLVDDVLFTGRT) is the PRPP-binding element.

The protein belongs to the purine/pyrimidine phosphoribosyltransferase family. PyrR subfamily.

It carries out the reaction UMP + diphosphate = 5-phospho-alpha-D-ribose 1-diphosphate + uracil. In terms of biological role, regulates the transcription of the pyrimidine nucleotide (pyr) operon in response to exogenous pyrimidines. Its function is as follows. Also displays a weak uracil phosphoribosyltransferase activity which is not physiologically significant. This is Bifunctional protein PyrR from Chloroflexus aurantiacus (strain ATCC 29366 / DSM 635 / J-10-fl).